The primary structure comprises 508 residues: Photosystem II CP47 reaction center protein (508 aa).

Transmembrane regions (helical) follow at residues 21-36, 101-115, 140-156, 203-218, 237-252, and 457-472; these read SVHIMHTALVAGWAGS, IVFSGLCFLAAIWHW, GIHLFLSGVACFGFGAF, IAAGTLGILAGLFHLS, VLSSSIAAVFFAAFVV, and SFALLFFFGHIWHGAR.

Belongs to the PsbB/PsbC family. PsbB subfamily. In terms of assembly, PSII is composed of 1 copy each of membrane proteins PsbA, PsbB, PsbC, PsbD, PsbE, PsbF, PsbH, PsbI, PsbJ, PsbK, PsbL, PsbM, PsbT, PsbX, PsbY, PsbZ, Psb30/Ycf12, at least 3 peripheral proteins of the oxygen-evolving complex and a large number of cofactors. It forms dimeric complexes. Binds multiple chlorophylls. PSII binds additional chlorophylls, carotenoids and specific lipids. is required as a cofactor.

It is found in the plastid. The protein resides in the chloroplast thylakoid membrane. In terms of biological role, one of the components of the core complex of photosystem II (PSII). It binds chlorophyll and helps catalyze the primary light-induced photochemical processes of PSII. PSII is a light-driven water:plastoquinone oxidoreductase, using light energy to abstract electrons from H(2)O, generating O(2) and a proton gradient subsequently used for ATP formation. This chain is Photosystem II CP47 reaction center protein, found in Atropa belladonna (Belladonna).